A 320-amino-acid polypeptide reads, in one-letter code: ATP-dependent 6-phosphofructokinase (320 aa).

G12 contacts ATP. Residues 22–26 and 55–60 contribute to the ADP site; these read RGVVR and RYSVSD. ATP is bound by residues 73–74 and 103–106; these read RF and GDGS. D104 serves as a coordination point for Mg(2+). Substrate is bound at residue 126-128; the sequence is TID. D128 functions as the Proton acceptor in the catalytic mechanism. Residue R155 coordinates ADP. Residues R163 and 170-172 contribute to the substrate site; that span reads MGR. ADP-binding positions include 186-188, K212, and 214-216; these read GCE and KKH. Residues E223, R244, and 250-253 each bind substrate; that span reads HIQR.

The protein belongs to the phosphofructokinase type A (PFKA) family. ATP-dependent PFK group I subfamily. Prokaryotic clade 'B1' sub-subfamily. In terms of assembly, homotetramer. The cofactor is Mg(2+).

It is found in the cytoplasm. The catalysed reaction is beta-D-fructose 6-phosphate + ATP = beta-D-fructose 1,6-bisphosphate + ADP + H(+). Its pathway is carbohydrate degradation; glycolysis; D-glyceraldehyde 3-phosphate and glycerone phosphate from D-glucose: step 3/4. With respect to regulation, allosterically activated by ADP and other diphosphonucleosides, and allosterically inhibited by phosphoenolpyruvate. Its function is as follows. Catalyzes the phosphorylation of D-fructose 6-phosphate to fructose 1,6-bisphosphate by ATP, the first committing step of glycolysis. This chain is ATP-dependent 6-phosphofructokinase, found in Citrobacter koseri (strain ATCC BAA-895 / CDC 4225-83 / SGSC4696).